Reading from the N-terminus, the 388-residue chain is 3-dehydroquinate synthase (388 aa).

Residues 85 to 90 (DGEQYK), 119 to 123 (GVIGD), 143 to 144 (TT), K156, K165, and 183 to 186 (TLKT) each bind NAD(+). E198, H261, and H278 together coordinate Zn(2+).

Belongs to the sugar phosphate cyclases superfamily. Dehydroquinate synthase family. It depends on Co(2+) as a cofactor. Requires Zn(2+) as cofactor. The cofactor is NAD(+).

Its subcellular location is the cytoplasm. The enzyme catalyses 7-phospho-2-dehydro-3-deoxy-D-arabino-heptonate = 3-dehydroquinate + phosphate. It functions in the pathway metabolic intermediate biosynthesis; chorismate biosynthesis; chorismate from D-erythrose 4-phosphate and phosphoenolpyruvate: step 2/7. In terms of biological role, catalyzes the conversion of 3-deoxy-D-arabino-heptulosonate 7-phosphate (DAHP) to dehydroquinate (DHQ). The sequence is that of 3-dehydroquinate synthase from Psychrobacter arcticus (strain DSM 17307 / VKM B-2377 / 273-4).